A 70-amino-acid chain; its full sequence is U2-agatoxin-Ao1m (70 aa).

The first 20 residues, 1 to 20 (MRAIISLFLISAMVFSMIQA), serve as a signal peptide directing secretion. Residues 21–34 (VPEEXGLQLSEDER) constitute a propeptide that is removed on maturation. 3 disulfides stabilise this stretch: cysteine 37-cysteine 53, cysteine 44-cysteine 58, and cysteine 52-cysteine 68. Leucine 69 carries the post-translational modification Leucine amide.

It belongs to the neurotoxin 01 (U2-agtx) family. Expressed by the venom gland.

The protein resides in the secreted. Functionally, insect active toxin causing rapid but reversible paralysis in crickets. No activity shown in mammals. Does not show effect on mammalian voltage-gated calcium channels. The polypeptide is U2-agatoxin-Ao1m (Agelena orientalis (Funnel-web spider)).